Reading from the N-terminus, the 102-residue chain is Outer membrane protein assembly factor BamE (102 aa).

The first 20 residues, 1–20 (MNNYIKALLIIICFSSCSIS), serve as a signal peptide directing secretion.

This sequence belongs to the BamE family. Part of the Bam complex.

The protein resides in the cell outer membrane. In terms of biological role, part of the outer membrane protein assembly complex, which is involved in assembly and insertion of beta-barrel proteins into the outer membrane. The chain is Outer membrane protein assembly factor BamE from Buchnera aphidicola subsp. Acyrthosiphon pisum (strain APS) (Acyrthosiphon pisum symbiotic bacterium).